Reading from the N-terminus, the 173-residue chain is Eggshell protein (173 aa).

The signal sequence occupies residues 1–18; that stretch reads MKQSLTLVFLVAIGYATA. Residues 145–162 show a composition bias toward gly residues; sequence GSGKGKGGGKGGKGGKGG. Positions 145 to 173 are disordered; the sequence is GSGKGKGGGKGGKGGKGGTYKPSHYGGGY.

In Schistosoma mansoni (Blood fluke), this protein is Eggshell protein.